Consider the following 114-residue polypeptide: MSYISGARLVADEQVRIASTKMDGIGPKKAIQVRSRLGGNIKRKELTKYQIDQIEQMRGQDHVVHWELKRGERADIERFISISCYRGIRHQDGLPLRGQRSHTNARTSRKRIRK.

Residues 92–114 (DGLPLRGQRSHTNARTSRKRIRK) form a disordered region.

This sequence belongs to the universal ribosomal protein uS13 family. Part of the small ribosomal subunit.

The protein resides in the mitochondrion. Its function is as follows. Located at the top of the head of the small subunit, it contacts several helices of the 18S rRNA. The sequence is that of Small ribosomal subunit protein uS13m (RPS13) from Oenothera berteroana (Bertero's evening primrose).